A 200-amino-acid chain; its full sequence is NADH-quinone oxidoreductase subunit B (200 aa).

[4Fe-4S] cluster contacts are provided by Cys-78, Cys-79, Cys-144, and Cys-174.

The protein belongs to the complex I 20 kDa subunit family. In terms of assembly, NDH-1 is composed of 14 different subunits. Subunits NuoB, C, D, E, F, and G constitute the peripheral sector of the complex. [4Fe-4S] cluster serves as cofactor.

The protein localises to the cell membrane. It carries out the reaction a quinone + NADH + 5 H(+)(in) = a quinol + NAD(+) + 4 H(+)(out). Functionally, NDH-1 shuttles electrons from NADH, via FMN and iron-sulfur (Fe-S) centers, to quinones in the respiratory chain. The immediate electron acceptor for the enzyme in this species is believed to be ubiquinone. Couples the redox reaction to proton translocation (for every two electrons transferred, four hydrogen ions are translocated across the cytoplasmic membrane), and thus conserves the redox energy in a proton gradient. The chain is NADH-quinone oxidoreductase subunit B from Dehalococcoides mccartyi (strain ATCC BAA-2266 / KCTC 15142 / 195) (Dehalococcoides ethenogenes (strain 195)).